Reading from the N-terminus, the 485-residue chain is MDFTNYKAHELKNLISKKEASVEEVTKAHLENVKNIDEKVNAFLYIAEEEALNDAKALDEKLSKGEDIGLLGGAPLGIKDNISVKNMQNTCASKILEGYISPYDATVSESVKSQGGVILGKLNMDEFAMGSSTENSAYKITRNPWDLDRVPGGSSGGSAAAVASKEVPLALGTDTGGSVRQPASFCGIVGLKPTYGRVSRSGVVAYGSTLDQVGTLGRDVKDCALLTQVISGVDHRDFTTANINVPNYENSLSENIKGKKIALPKEFFKDGLDPKVQKAIYDALEVFKANGAEITEVSLPLADYAISAYYLLACAEASSNLARFDGVRYGHRSESVEDAVDVYFKSRSEAFGKEVKKRIMLGTYALSAGYYDAYYKKALKVRNLIKGEFENIFKDFDAIISPTAPTPAYKIGEKTENALEMYLGDIYTVPVNIAGIPAISLPCGVADGLPVGLQIMGNYFKEDTLFNLAYSYEQSTKWHEMHPNL.

Catalysis depends on charge relay system residues Lys79 and Ser154. The active-site Acyl-ester intermediate is the Ser178.

This sequence belongs to the amidase family. GatA subfamily. As to quaternary structure, heterotrimer of A, B and C subunits.

The catalysed reaction is L-glutamyl-tRNA(Gln) + L-glutamine + ATP + H2O = L-glutaminyl-tRNA(Gln) + L-glutamate + ADP + phosphate + H(+). Allows the formation of correctly charged Gln-tRNA(Gln) through the transamidation of misacylated Glu-tRNA(Gln) in organisms which lack glutaminyl-tRNA synthetase. The reaction takes place in the presence of glutamine and ATP through an activated gamma-phospho-Glu-tRNA(Gln). This is Glutamyl-tRNA(Gln) amidotransferase subunit A from Clostridium botulinum (strain Eklund 17B / Type B).